Reading from the N-terminus, the 347-residue chain is APALGFVPIAVHFDLFGCLQEIGKPATAQDVCISITFLHKKSMFAKVNRSSDDTLFLMGGLGFLDLLPDDVYQANAVTRFLVDTPSAQHGAMHFTSEGLLASAFLMRRLMDTKFEYPFQECDTPFQYAHKLMGNEHLAREHVYSVMHETGRLDSFNTFMTGKFGRWGTMPDRVRKLGYDLDGLLQSTAPERIRVVDIGGGRGELLLEMQATYPHLLKKENLILQEYNADIGVVPEVTEMGWNYKEDASEQPVKGALLYSMAHVLHNLSDIESIKLLTKVARVMAPSSRLLIQEFTKNAASSTTHAAMILMHAGRERTSAEWRDLAAFAGLEITFEAYPPNGECVVEM.

W166 contributes to the S-adenosyl-L-methionine binding site. The active-site Proton acceptor is H265.

Belongs to the class I-like SAM-binding methyltransferase superfamily. Cation-independent O-methyltransferase family.

It participates in secondary metabolite biosynthesis. O-methyltransferase; part of the gene cluster that mediates the biosynthesis of aurasperone B, a dimeric gamma-naphthopyrone. The first step in the biosynthesis of aurasperone B is the production of gamma-naphthopyrone precursor YWA1 by the non-reducing polyketide synthase albA, via condensation of one acetyl-CoA starter unit with 6 malonyl-CoA units. YWA1 is then methylated by aunE at position C-6 to yield foncesin which is further methylated at position C-8 by aunD to produce fonsecin B. A key enzyme in the biosynthetic pathway is the cytochrome P450 monooxygenase aunB which catalyzes the oxidative dimerization of fonsecin B to aurasperone B. AunB also catalyzes the oxidative dimerization of rubrofusarin B into aurasperone A. In Aspergillus niger (strain ATCC 1015 / CBS 113.46 / FGSC A1144 / LSHB Ac4 / NCTC 3858a / NRRL 328 / USDA 3528.7), this protein is O-methyltransferase aunE.